The primary structure comprises 728 residues: Catalase-peroxidase (728 aa).

The segment at residues 91–218 is a cross-link (tryptophyl-tyrosyl-methioninium (Trp-Tyr) (with M-244)); that stretch reads WHSAGTYRIA…LAAVQMGLIY (128 aa). His-92 serves as the catalytic Proton acceptor. A cross-link (tryptophyl-tyrosyl-methioninium (Tyr-Met) (with W-91)) is located at residues 218–244; the sequence is YVNPEGPDGNPDPVAAARDIRETFARM. His-259 provides a ligand contact to heme b.

The protein belongs to the peroxidase family. Peroxidase/catalase subfamily. Homodimer or homotetramer. The cofactor is heme b. Formation of the three residue Trp-Tyr-Met cross-link is important for the catalase, but not the peroxidase activity of the enzyme.

It carries out the reaction H2O2 + AH2 = A + 2 H2O. The catalysed reaction is 2 H2O2 = O2 + 2 H2O. Functionally, bifunctional enzyme with both catalase and broad-spectrum peroxidase activity. In Burkholderia multivorans (strain ATCC 17616 / 249), this protein is Catalase-peroxidase.